We begin with the raw amino-acid sequence, 49 residues long: Small ribosomal subunit protein eS31 (49 aa).

Cys-21, Cys-24, Cys-39, and Cys-42 together coordinate Zn(2+). The C4-type zinc finger occupies Cys-21–Cys-42.

The protein belongs to the eukaryotic ribosomal protein eS31 family. In terms of assembly, part of the 30S ribosomal subunit. Zn(2+) is required as a cofactor.

The sequence is that of Small ribosomal subunit protein eS31 from Methanosarcina mazei (strain ATCC BAA-159 / DSM 3647 / Goe1 / Go1 / JCM 11833 / OCM 88) (Methanosarcina frisia).